The following is a 481-amino-acid chain: MTDRADADRPATSPTGLRLYDTMTGAVRDFVPLRDGHVSIYLCGATVQGLPHIGHVRSGVAFDVLRRWLTAKGLDVAFIRNVTDIDDKILNKAADAGRPWWEWAATYERAFSAAYDALGVLPPSAEPRATGHITQMVELIERLIDRGHAYTGDGDVYFNVATLPDYGKLSGHRIDDVHQGEGVATGKRDQRDFTLWKGAKPGEPSWPTPWGRGRPGWHTECVAMCEAYLGAEFDIHAGGMDLVFPHHENEIAQAEAAGDGFARFWLHNGWVTMGGEKMSKSLGNVLSIPAVLQRVRAAELRYYLGSAHYRSMLEFSETALQDAVKAYAGVEDFLHRVRTRVGTVVPGDWTPKFAAALDDDLSVPIALAEVHAARAVGNRALDSGDHETAMTQARSIRAMMGILGCDPLDERWESRDETSAALAAIDVLVRWALDSRAEARNRKDWATADQIRDRLKEAGIEVTDTADGPQWSLLDGDSKDV.

Cys43 serves as a coordination point for Zn(2+). The 'HIGH' region signature appears at 45-55; it reads ATVQGLPHIGH. Positions 221, 246, and 250 each coordinate Zn(2+). A 'KMSKS' region motif is present at residues 277-281; sequence KMSKS. Lys280 provides a ligand contact to ATP.

Belongs to the class-I aminoacyl-tRNA synthetase family. In terms of assembly, monomer. Requires Zn(2+) as cofactor.

It is found in the cytoplasm. The enzyme catalyses tRNA(Cys) + L-cysteine + ATP = L-cysteinyl-tRNA(Cys) + AMP + diphosphate. The polypeptide is Cysteine--tRNA ligase (Mycobacterium sp. (strain JLS)).